Here is a 380-residue protein sequence, read N- to C-terminus: MAGNPDVVTVLLGGDVMLGRGVDQILPHPGKPQLRERYMRDATGYVRLAERVNGRIPLPVDWRWPWGEALAVLENTATDVCLINLETTITADGEFADRKPVCYRMHPDNVPALTALRPHVCALANNHILDFGYQGLTDTVAALAGAGIQSVGAGADLLAARRSALVTVGHERRVIVGSVAAESSGVPESWAARRDRPGVWLIRDPAQRDVADDVAAQVLADKRPGDIAIVSMHWGSNWGYATAPGDVAFAHRLIDAGIDMVHGHSSHHPRPIEIYRGKPILYGCGDVVDDYEGIGGHESFRSELRLLYLTVTDPASGNLISLQMLPLRVSRMRLQRASQTDTEWLRNTIERISRRFGIRVVTRPDNLLEVVPAANLTSKE.

Belongs to the CapA family.

In terms of biological role, could be involved in the biosynthesis, transport or localization of poly-alpha-L-glutamine (PLG), a cell wall component. Contributes to stress tolerance and virulence. This is Probable polyglutamine synthesis accessory protein MT0602 from Mycobacterium tuberculosis (strain CDC 1551 / Oshkosh).